The sequence spans 554 residues: Glutamine--tRNA ligase (554 aa).

The 'HIGH' region motif lies at 34-44 (PEPNGYLHIGH). ATP contacts are provided by residues 35–37 (EPN) and 41–47 (HIGHAKS). The L-glutamine site is built by Asp67 and Tyr212. Residues Thr231, 261-262 (RL), and 269-271 (MSK) contribute to the ATP site. The 'KMSKS' region signature appears at 268–272 (VMSKR). The interval 317–324 (TKQDNTIE) is interaction with tRNA.

The protein belongs to the class-I aminoacyl-tRNA synthetase family. In terms of assembly, monomer.

The protein resides in the cytoplasm. It carries out the reaction tRNA(Gln) + L-glutamine + ATP = L-glutaminyl-tRNA(Gln) + AMP + diphosphate. The polypeptide is Glutamine--tRNA ligase (Escherichia coli (strain 55989 / EAEC)).